The chain runs to 124 residues: S-adenosylmethionine decarboxylase proenzyme (124 aa).

Ser-63 acts as the Schiff-base intermediate with substrate; via pyruvic acid in catalysis. Ser-63 is subject to Pyruvic acid (Ser); by autocatalysis. His-68 serves as the catalytic Proton acceptor; for processing activity. Cys-83 functions as the Proton donor; for catalytic activity in the catalytic mechanism.

This sequence belongs to the prokaryotic AdoMetDC family. Type 1 subfamily. As to quaternary structure, heterotetramer of two alpha and two beta chains arranged as a dimer of alpha/beta heterodimers. Pyruvate serves as cofactor. In terms of processing, is synthesized initially as an inactive proenzyme. Formation of the active enzyme involves a self-maturation process in which the active site pyruvoyl group is generated from an internal serine residue via an autocatalytic post-translational modification. Two non-identical subunits are generated from the proenzyme in this reaction, and the pyruvate is formed at the N-terminus of the alpha chain, which is derived from the carboxyl end of the proenzyme. The post-translation cleavage follows an unusual pathway, termed non-hydrolytic serinolysis, in which the side chain hydroxyl group of the serine supplies its oxygen atom to form the C-terminus of the beta chain, while the remainder of the serine residue undergoes an oxidative deamination to produce ammonia and the pyruvoyl group blocking the N-terminus of the alpha chain.

It catalyses the reaction S-adenosyl-L-methionine + H(+) = S-adenosyl 3-(methylsulfanyl)propylamine + CO2. It participates in amine and polyamine biosynthesis; S-adenosylmethioninamine biosynthesis; S-adenosylmethioninamine from S-adenosyl-L-methionine: step 1/1. Its function is as follows. Catalyzes the decarboxylation of S-adenosylmethionine to S-adenosylmethioninamine (dcAdoMet), the propylamine donor required for the synthesis of the polyamines spermine and spermidine from the diamine putrescine. In Acetivibrio thermocellus (strain ATCC 27405 / DSM 1237 / JCM 9322 / NBRC 103400 / NCIMB 10682 / NRRL B-4536 / VPI 7372) (Clostridium thermocellum), this protein is S-adenosylmethionine decarboxylase proenzyme.